The chain runs to 342 residues: Probable tyrosine--tRNA ligase, cytoplasmic (342 aa).

An L-tyrosine-binding site is contributed by Tyr48. Residues 53–61 carry the 'HIGH' region motif; that stretch reads ITGKPHIGY. Tyr175, Gln179, Asp182, and Gln197 together coordinate L-tyrosine. Positions 231–235 match the 'KMSKS' region motif; that stretch reads KMSSS.

Belongs to the class-I aminoacyl-tRNA synthetase family. Homodimer.

Its subcellular location is the cytoplasm. It catalyses the reaction tRNA(Tyr) + L-tyrosine + ATP = L-tyrosyl-tRNA(Tyr) + AMP + diphosphate + H(+). This chain is Probable tyrosine--tRNA ligase, cytoplasmic, found in Enterocytozoon bieneusi (strain H348) (Microsporidian parasite).